An 873-amino-acid polypeptide reads, in one-letter code: MVANGHFAGSADGQHSSSYEHGVQVIDEDKEFNPNVSKYLTYENVTPAGFNYHLISVFGSQSTGKSTLLNNLFGTHFSVMSETERRQTTKGIWLSKNKRLELRKDRDPQAKMADNILVMDVEGTDGRERGEDQDFERKSALFALATSEVLIVNIWEHQVGLYQGANMGLLKTVFEVNLELFLKDNKSTPRSLLFFVIRDFLGTTPLQNLQNTLLQDLNRIWSSLSKPAGLENSTINDYFDFAFAGLPHKNFQPDKFMDEVQKLSTRFREGHRDPNSLDRKGTGSIEGGIFLPEYHRRIPADGFAVYAEGVWDQIVNNKDLDLPTQQELLAQFRCDEISREALVAFDEAISPFELKQAEAVQAGYPEVLGGLGPAMRNARMKAVKNFDTEACRYHKRVYQMKKAELQDKIDTRLKALFLGQLGAAHRSGVQEFSESVSAAVKAGQKKGASYDFAEIVRKQRKLAIEKFEQEARSTLVEDAPWSNYQQELSLYQKDLERTSGQLRRDEMRRLATRVERWVRSRLGESVDLEFNALGSGRGGSGAPEFGDKPSEKTIWDRVWTLFVDTVLDAERRFTERASSFDASLDEVDVGLWRLRRKSWGVLRAKIDEEMMEGNLLLKLRENFEDKFRYDDAGVPRIWRPTDDIESVYSQARESTLTLIPLLARFKLAETNAPPPLDKWIGHTPSSATPADEEDLTPIGGVDDDEGKSLEEEMTLIGEAKKQDITVRFKKTADGVYVEAKRSAIGGITQVPLYFYGLLFALGWNEILAVLRNPVYFLLLFVCAIGAYITYQLNLWGPIIKMTEAASHQAVEEGKRRLREFLEASDTGRQAMAMSGARNATEEHEMSRLSRKPAERGGRKNRADEDVDDDDDDF.

Residues 1–20 (MVANGHFAGSADGQHSSSYE) form a disordered region. The Cytoplasmic portion of the chain corresponds to 1–749 (MVANGHFAGS…KRSAIGGITQ (749 aa)). Residues 49-307 (GFNYHLISVF…IPADGFAVYA (259 aa)) enclose the GB1/RHD3-type G domain. A GTP-binding site is contributed by 59 to 66 (GSQSTGKS). Positions 482-506 (SNYQQELSLYQKDLERTSGQLRRDE) form a coiled coil. Residues 677–703 (DKWIGHTPSSATPADEEDLTPIGGVDD) are disordered. The segment covering 690 to 703 (ADEEDLTPIGGVDD) has biased composition (acidic residues). A helical membrane pass occupies residues 750-770 (VPLYFYGLLFALGWNEILAVL). Topologically, residues 771–773 (RNP) are lumenal. The chain crosses the membrane as a helical span at residues 774–794 (VYFLLLFVCAIGAYITYQLNL). Over 795 to 873 (WGPIIKMTEA…EDVDDDDDDF (79 aa)) the chain is Cytoplasmic. A disordered region spans residues 828 to 873 (RQAMAMSGARNATEEHEMSRLSRKPAERGGRKNRADEDVDDDDDDF). The segment covering 839–863 (ATEEHEMSRLSRKPAERGGRKNRAD) has biased composition (basic and acidic residues). Residues 864–873 (EDVDDDDDDF) show a composition bias toward acidic residues.

This sequence belongs to the TRAFAC class dynamin-like GTPase superfamily. GB1/RHD3 GTPase family. RHD3 subfamily.

It localises to the endoplasmic reticulum membrane. Cooperates with the reticulon proteins and tubule-shaping DP1 family proteins to generate and maintain the structure of the tubular endoplasmic reticulum network. Has GTPase activity, which is required for its function in ER organization. This Ajellomyces capsulatus (strain NAm1 / WU24) (Darling's disease fungus) protein is Protein SEY1.